The sequence spans 454 residues: GTPase Der (454 aa).

EngA-type G domains follow at residues 4–167 and 188–363; these read AIVA…SEDK and LELA…ASWQ. GTP-binding positions include 10-17, 56-60, 121-124, 194-201, 241-245, and 306-309; these read GKPNVGKS, DTPGL, NKTE, GRPNCGKS, DTAGV, and NKWD. Positions 364-450 constitute a KH-like domain; the sequence is KRVTTGTLNQ…PVRLSFVKGK (87 aa).

The protein belongs to the TRAFAC class TrmE-Era-EngA-EngB-Septin-like GTPase superfamily. EngA (Der) GTPase family. As to quaternary structure, associates with the 50S ribosomal subunit.

Functionally, GTPase that plays an essential role in the late steps of ribosome biogenesis. This is GTPase Der from Orientia tsutsugamushi (strain Ikeda) (Rickettsia tsutsugamushi).